Reading from the N-terminus, the 211-residue chain is MSNSPAFGKNKIELPQLDWAYDSLEPYISGKINEIHHKKHHQTYVNGYNSAIEQLIEAESQGDVKKAIVIQQNIKFHGGGHTNHVLFWKSLAPNSQNGGKHPGSDTNLGKKIIEQYGSIDNLISITNAKLASIQGSGWAFIVKNKQNGGNLDVVTTYNQDTVTDPLVPLIAIDAWEHAYYLQYQNVKADYFKAIWNVINWEEASKRFDSHL.

Residues His-36, His-84, Asp-173, and His-177 each coordinate Mn(2+).

This sequence belongs to the iron/manganese superoxide dismutase family. In terms of assembly, homotetramer. It depends on Mn(2+) as a cofactor.

The protein localises to the mitochondrion matrix. It carries out the reaction 2 superoxide + 2 H(+) = H2O2 + O2. Destroys superoxide anion radicals which are normally produced within the cells and which are toxic to biological systems. The polypeptide is Probable superoxide dismutase [Mn], mitochondrial (Debaryomyces hansenii (strain ATCC 36239 / CBS 767 / BCRC 21394 / JCM 1990 / NBRC 0083 / IGC 2968) (Yeast)).